Consider the following 260-residue polypeptide: Late transcription factor 1 (260 aa).

This sequence belongs to the chordopoxvirinae VLTF-1 family. In terms of assembly, interacts with the late transcription factors VLTF-2 and VLTF-3. Interacts with the late transcription elongation factor H5/VLTF-4. Interacts with itself.

Associates with RNA polymerase to initiate transcription from late gene promoters. In Vertebrata (FPV), this protein is Late transcription factor 1 (VLTF1).